The sequence spans 196 residues: MFCEKAIELIRELQRASDGQLPAFNEDGIRQILEEMKALYEQNQADVNEAKTEGRSDLIPTIKFRHCCLLRNRRCIVAYLYDRLLRIRALRWEYGSVLPSALRFHMSTEEMDWFNQYKRSLATYMRSLGGEEGLDITQDMKPPKSLYIEVRCLRDYGEFEIDDGTTILLKKNSQHFLPRWKCEQLIRQGVLEHVLS.

It belongs to the GINS1/PSF1 family. Component of the GINS complex which is a heterotetramer of gins1/psf1, gins2/psf2, gins3/psf3 and gins4/sld5. Component of the CMG helicase complex, composed of the mcm2-7 complex, the GINS complex and cdc45.

Its subcellular location is the nucleus. It localises to the chromosome. Functionally, required for correct functioning of the GINS complex, a complex that plays an essential role in the initiation of DNA replication, and progression of DNA replication forks. GINS complex is a core component of CDC45-MCM-GINS (CMG) helicase, the molecular machine that unwinds template DNA during replication, and around which the replisome is built. The polypeptide is DNA replication complex GINS protein PSF1 (Xenopus laevis (African clawed frog)).